The primary structure comprises 128 residues: Sulfurtransferase TusD (128 aa).

The active-site Cysteine persulfide intermediate is Cys-78.

The protein belongs to the DsrE/TusD family. As to quaternary structure, heterohexamer, formed by a dimer of trimers. The hexameric TusBCD complex contains 2 copies each of TusB, TusC and TusD. The TusBCD complex interacts with TusE.

The protein resides in the cytoplasm. Functionally, part of a sulfur-relay system required for 2-thiolation of 5-methylaminomethyl-2-thiouridine (mnm(5)s(2)U) at tRNA wobble positions. Accepts sulfur from TusA and transfers it in turn to TusE. This is Sulfurtransferase TusD from Salmonella arizonae (strain ATCC BAA-731 / CDC346-86 / RSK2980).